Consider the following 220-residue polypeptide: Guanylate kinase (220 aa).

One can recognise a Guanylate kinase-like domain in the interval Gly-15–Lys-194. ATP is bound at residue Ser-22 to Ser-29.

It belongs to the guanylate kinase family.

The protein localises to the cytoplasm. The enzyme catalyses GMP + ATP = GDP + ADP. Essential for recycling GMP and indirectly, cGMP. The polypeptide is Guanylate kinase (Rhizobium etli (strain ATCC 51251 / DSM 11541 / JCM 21823 / NBRC 15573 / CFN 42)).